Here is a 77-residue protein sequence, read N- to C-terminus: U8-lycotoxin-Ls1w (77 aa).

A signal peptide spans 1–20 (MKLIIFTGLVLFAIVSLIEA). The propeptide occupies 21–26 (QAENEK).

The protein belongs to the neurotoxin 19 (CSTX) family. 08 (U8-Lctx) subfamily. Post-translationally, contains 4 disulfide bonds. Expressed by the venom gland.

It localises to the secreted. This chain is U8-lycotoxin-Ls1w, found in Lycosa singoriensis (Wolf spider).